A 257-amino-acid polypeptide reads, in one-letter code: Acetyl-coenzyme A carboxylase carboxyl transferase subunit beta (257 aa).

The 253-residue stretch at 5–257 (VFTKCERCKQ…DLERLLGFVG (253 aa)) folds into the CoA carboxyltransferase N-terminal domain. Residues Cys-9, Cys-12, Cys-28, and Cys-31 each contribute to the Zn(2+) site. Residues 9 to 31 (CERCKQPVYEKDLRARFNVCPNC) form a C4-type zinc finger.

This sequence belongs to the AccD/PCCB family. Acetyl-CoA carboxylase is a heterohexamer composed of biotin carboxyl carrier protein (AccB), biotin carboxylase (AccC) and two subunits each of ACCase subunit alpha (AccA) and ACCase subunit beta (AccD). Zn(2+) is required as a cofactor.

Its subcellular location is the cytoplasm. The catalysed reaction is N(6)-carboxybiotinyl-L-lysyl-[protein] + acetyl-CoA = N(6)-biotinyl-L-lysyl-[protein] + malonyl-CoA. The protein operates within lipid metabolism; malonyl-CoA biosynthesis; malonyl-CoA from acetyl-CoA: step 1/1. Component of the acetyl coenzyme A carboxylase (ACC) complex. Biotin carboxylase (BC) catalyzes the carboxylation of biotin on its carrier protein (BCCP) and then the CO(2) group is transferred by the transcarboxylase to acetyl-CoA to form malonyl-CoA. This Rubrobacter xylanophilus (strain DSM 9941 / JCM 11954 / NBRC 16129 / PRD-1) protein is Acetyl-coenzyme A carboxylase carboxyl transferase subunit beta.